A 393-amino-acid chain; its full sequence is Chorismate synthase (393 aa).

Residues Arg-40 and Arg-46 each contribute to the NADP(+) site. FMN-binding positions include 129–131 (RSS), 249–250 (QA), Gly-301, 316–320 (KPIPT), and Arg-342.

This sequence belongs to the chorismate synthase family. In terms of assembly, homotetramer. FMNH2 is required as a cofactor.

The enzyme catalyses 5-O-(1-carboxyvinyl)-3-phosphoshikimate = chorismate + phosphate. It participates in metabolic intermediate biosynthesis; chorismate biosynthesis; chorismate from D-erythrose 4-phosphate and phosphoenolpyruvate: step 7/7. Functionally, catalyzes the anti-1,4-elimination of the C-3 phosphate and the C-6 proR hydrogen from 5-enolpyruvylshikimate-3-phosphate (EPSP) to yield chorismate, which is the branch point compound that serves as the starting substrate for the three terminal pathways of aromatic amino acid biosynthesis. This reaction introduces a second double bond into the aromatic ring system. The polypeptide is Chorismate synthase (Geobacter metallireducens (strain ATCC 53774 / DSM 7210 / GS-15)).